Consider the following 303-residue polypeptide: tRNA pseudouridine synthase B (303 aa).

The Nucleophile role is filled by Asp47.

Belongs to the pseudouridine synthase TruB family. Type 1 subfamily.

The catalysed reaction is uridine(55) in tRNA = pseudouridine(55) in tRNA. Its function is as follows. Responsible for synthesis of pseudouridine from uracil-55 in the psi GC loop of transfer RNAs. This chain is tRNA pseudouridine synthase B, found in Ruegeria pomeroyi (strain ATCC 700808 / DSM 15171 / DSS-3) (Silicibacter pomeroyi).